We begin with the raw amino-acid sequence, 530 residues long: Phosphoenolpyruvate carboxykinase (ATP) 2 (530 aa).

Residues arginine 54, tyrosine 191, and lysine 197 each contribute to the substrate site. Residues lysine 197, histidine 216, and glycine 232 to threonine 240 contribute to the ATP site. Residues lysine 197 and histidine 216 each coordinate Mn(2+). Aspartate 253 is a Mn(2+) binding site. Residues glutamate 281, arginine 318, arginine 437–valine 438, and threonine 443 contribute to the ATP site. Arginine 318 lines the substrate pocket.

Belongs to the phosphoenolpyruvate carboxykinase (ATP) family. The cofactor is Mn(2+).

It localises to the cytoplasm. The enzyme catalyses oxaloacetate + ATP = phosphoenolpyruvate + ADP + CO2. It functions in the pathway carbohydrate biosynthesis; gluconeogenesis. Functionally, involved in the gluconeogenesis. Catalyzes the conversion of oxaloacetate (OAA) to phosphoenolpyruvate (PEP) through direct phosphoryl transfer between the nucleoside triphosphate and OAA. The polypeptide is Phosphoenolpyruvate carboxykinase (ATP) 2 (Salinibacter ruber (strain DSM 13855 / M31)).